The chain runs to 77 residues: Metallothionein-like protein type 2 (77 aa).

The protein belongs to the metallothionein superfamily. Type 15 family. In terms of tissue distribution, expressed in the left, stem and flower, at very low levels in roots and is not detectable in mesophyll protoplasts.

In terms of biological role, metallothioneins have a high content of cysteine residues that bind various heavy metals. This chain is Metallothionein-like protein type 2 (MTI), found in Vicia faba (Broad bean).